The sequence spans 1009 residues: Protein-tyrosine kinase 2-beta (1009 aa).

Residues 39–359 enclose the FERM domain; sequence RILKVCFYSN…GYCRLQGEHK (321 aa). Residues Ser361, Ser375, and Ser399 each carry the phosphoserine modification. A Phosphotyrosine; by autocatalysis modification is found at Tyr402. The 259-residue stretch at 425–683 folds into the Protein kinase domain; the sequence is VVLNRILGEG…ELVCSLSDIY (259 aa). ATP contacts are provided by residues 431-439, Lys457, and 503-509; these read LGEGFFGEV and ELYPYGE. Asp549 functions as the Proton acceptor in the catalytic mechanism. Phosphotyrosine is present on residues Tyr579, Tyr580, and Tyr722. Residues 702–725 are disordered; it reads PKILEPTAFQEPPPKPSRPKYKHP. A Phosphoserine modification is found at Ser762. Thr765 carries the phosphothreonine modification. Positions 801-1009 are interaction with TGFB1I1; it reads KIKMRQVLDR…VANLAHPPAE (209 aa). Tyr834 is modified (phosphotyrosine). A Phosphoserine modification is found at Ser839. At Thr842 the chain carries Phosphothreonine. Tyr849 carries the phosphotyrosine modification. Ser866 is subject to Phosphoserine. Positions 868–1009 are focal adhesion targeting (FAT); the sequence is QPTANLDRTD…VANLAHPPAE (142 aa). Residue Tyr881 is modified to Phosphotyrosine.

Belongs to the protein kinase superfamily. Tyr protein kinase family. FAK subfamily. As to quaternary structure, homodimer, or homooligomer. Interacts with NPHP1, ASAP1, ASAP2, ARHGAP26, SKAP2 and TGFB1I1. The Tyr-402 phosphorylated form interacts with SRC (via SH2 domain) and SRC family members. Forms a signaling complex with EPHA1, LCK and phosphatidylinositol 3-kinase; upon activation by EFNA1. Interacts with GRB2 (via SH2 domain). Interacts with P53/TP53 and MDM2. Interacts with MYLK. Interacts with BCAR1. Interacts with RB1CC1. Interacts with RHOU. Interacts with VAV1. Interacts with PDPK1. Interacts with LPXN and PTPN12. Interacts with SIRPA and SH2D3C. Interacts (hypophosphorylated) with PXN. Interacts with ARHGAP10. Interacts with KCNA2. In terms of processing, phosphorylated on tyrosine residues in response to various stimuli that elevate the intracellular calcium concentration; this activation is indirect and may be mediated by production of reactive oxygen species (ROS). Tyr-402 is the major autophosphorylation site, but other kinases can also phosphorylate Tyr-402. Autophosphorylation occurs in trans, i.e. one subunit of the dimeric receptor phosphorylates tyrosine residues on the other subunit. Phosphorylation at Tyr-402 promotes interaction with SRC and SRC family members, leading to phosphorylation at Tyr-579; Tyr-580 and Tyr-881. Phosphorylation at Tyr-881 is important for interaction with GRB2. Phosphorylated on tyrosine residues upon activation of FGR and PKC. Recruitment by NPHP1 to cell matrix adhesions initiates Tyr-402 phosphorylation. In monocytes, adherence to substrata is required for tyrosine phosphorylation and kinase activation. Angiotensin II, thapsigargin and L-alpha-lysophosphatidic acid (LPA) also induce autophosphorylation and increase kinase activity. Phosphorylation by MYLK promotes ITGB2 activation and is thus essential to trigger neutrophil transmigration during lung injury. Dephosphorylated by PTPN12. Highly expressed in pulmonary vein endothelial cells, lung and brain (at protein level). Isoform 1 is expressed at high levels in the brain (hippocampus, cerebral cortex and olfactory bulb) and poorly in the spleen and other tissues, whereas isoforms 2 and 3 are expressed in the spleen and brain (highest in cerebellum).

It localises to the cytoplasm. The protein localises to the perinuclear region. It is found in the cell membrane. Its subcellular location is the cell projection. The protein resides in the lamellipodium. It localises to the cell cortex. The protein localises to the nucleus. It is found in the cell junction. Its subcellular location is the focal adhesion. It carries out the reaction L-tyrosyl-[protein] + ATP = O-phospho-L-tyrosyl-[protein] + ADP + H(+). With respect to regulation, activated in response to stimuli that lead to increased intracellular Ca(2+) levels; this activation is indirect and may be mediated by calcium-mediated production of reactive oxygen species (ROS). Activated by autophosphorylation at Tyr-402; this creates a binding site for SRC family kinases and leads to phosphorylation at additional tyrosine residues. Phosphorylation at Tyr-402, Tyr-579 and Tyr-580 is required for optimal kinase activity. Functionally, non-receptor protein-tyrosine kinase that regulates reorganization of the actin cytoskeleton, cell polarization, cell migration, adhesion, spreading and bone remodeling. Plays a role in the regulation of the humoral immune response, and is required for normal levels of marginal B-cells in the spleen and normal migration of splenic B-cells. Required for normal macrophage polarization and migration towards sites of inflammation. Regulates cytoskeleton rearrangement and cell spreading in T-cells, and contributes to the regulation of T-cell responses. Promotes osteoclastic bone resorption; this requires both PTK2B/PYK2 and SRC. May inhibit differentiation and activity of osteoprogenitor cells. Functions in signaling downstream of integrin and collagen receptors, immune receptors, G-protein coupled receptors (GPCR), cytokine, chemokine and growth factor receptors, and mediates responses to cellular stress. Forms multisubunit signaling complexes with SRC and SRC family members upon activation; this leads to the phosphorylation of additional tyrosine residues, creating binding sites for scaffold proteins, effectors and substrates. Regulates numerous signaling pathways. Promotes activation of phosphatidylinositol 3-kinase and of the AKT1 signaling cascade. Promotes activation of NOS3. Regulates production of the cellular messenger cGMP. Promotes activation of the MAP kinase signaling cascade, including activation of MAPK1/ERK2, MAPK3/ERK1 and MAPK8/JNK1. Promotes activation of Rho family GTPases, such as RHOA and RAC1. Recruits the ubiquitin ligase MDM2 to P53/TP53 in the nucleus, and thereby regulates P53/TP53 activity, P53/TP53 ubiquitination and proteasomal degradation. Acts as a scaffold, binding to both PDPK1 and SRC, thereby allowing SRC to phosphorylate PDPK1 at 'Tyr-9, 'Tyr-373', and 'Tyr-376'. Promotes phosphorylation of NMDA receptors by SRC family members, and thereby contributes to the regulation of NMDA receptor ion channel activity and intracellular Ca(2+) levels. May also regulate potassium ion transport by phosphorylation of potassium channel subunits. Phosphorylates SRC; this increases SRC kinase activity. Phosphorylates ASAP1, NPHP1, KCNA2 and SHC1. Promotes phosphorylation of ASAP2, RHOU and PXN; this requires both SRC and PTK2/PYK2. The protein is Protein-tyrosine kinase 2-beta (Ptk2b) of Rattus norvegicus (Rat).